The primary structure comprises 243 residues: Carboxy-S-adenosyl-L-methionine synthase (243 aa).

S-adenosyl-L-methionine-binding positions include Tyr-40, 65 to 67 (GCS), 90 to 91 (DN), 118 to 119 (DI), Asn-133, and Arg-200.

This sequence belongs to the class I-like SAM-binding methyltransferase superfamily. Cx-SAM synthase family. In terms of assembly, homodimer.

It carries out the reaction prephenate + S-adenosyl-L-methionine = carboxy-S-adenosyl-L-methionine + 3-phenylpyruvate + H2O. Functionally, catalyzes the conversion of S-adenosyl-L-methionine (SAM) to carboxy-S-adenosyl-L-methionine (Cx-SAM). The sequence is that of Carboxy-S-adenosyl-L-methionine synthase from Shewanella woodyi (strain ATCC 51908 / MS32).